The sequence spans 1111 residues: MSSNTSRSCSTRSRQNSRVSSQVLVDAKLHGNFEESERLFDYSASINLNMPSSSCEIPSSAVSTYLQKIQRGMLIQPFGCLIVVDEKNLKVIAFSENTQEMLGLIPHTVPSMEQREALTIGTDVKSLFLSPGCSALEKAVDFGEISILNPITLHCRSSSKPFYAILHRIEEGLVIDLEPVSPDEVPVTAAGALRSYKLAAKSISRLQALPSGNMLLLCDALVKEVSELTGYDRVMVYKFHEDGHGEVIAECCREDMEPYLGLHYSATDIPQASRFLFMRNKVRMICDCSAVPVKVVQDKSLSQPISLSGSTLRAPHGCHAQYMSNMGSVASLVMSVTINGSDSDEMNRDLQTGRHLWGLVVCHHASPRFVPFPLRYACEFLTQVFGVQINKEAESAVLLKEKRILQTQSVLCDMLFRNAPIGIVTQSPNIMDLVKCDGAALYYRDNLWSLGVTPTETQIRDLIDWVLKSHGGNTGFTTESLMESGYPDASVLGESICGMAAVYISEKDFLFWFRSSTAKQIKWGGARHDPNDRDGKRMHPRSSFKAFMEIVRWKSVPWDDMEMDAINSLQLIIKGSLQEEHSKTVVDVPLVDNRVQKVDELCVIVNEMVRLIDTAAVPIFAVDASGVINGWNSKAAEVTGLAVEQAIGKPVSDLVEDDSVETVKNMLALALEGSEERGAEIRIRAFGPKRKSSPVELVVNTCCSRDMTNNVLGVCFIGQDVTGQKTLTENYSRVKGDYARIMWSPSTLIPPIFITNENGVCSEWNNAMQKLSGIKREEVVNKILLGEVFTTDDYGCCLKDHDTLTKLRIGFNAVISGQKNIEKLLFGFYHRDGSFIEALLSANKRTDIEGKVTGVLCFLQVPSPELQYALQVQQISEHAIACALNKLAYLRHEVKDPEKAISFLQDLLHSSGLSEDQKRLLRTSVLCREQLAKVISDSDIEGIEEGYVELDCSEFGLQESLEAVVKQVMELSIERKVQISCDYPQEVSSMRLYGDNLRLQQILSETLLSSIRFTPALRGLCVSFKVIARIEAIGKRMKRVELEFRIIHPAPGLPEDLVREMFQPLRKGTSREGLGLHITQKLVKLMERGTLRYLRESEMSAFVILTEFPLI.

A GAF domain is found at 213-393 (NMLLLCDALV…VFGVQINKEA (181 aa)). Cysteine 318 is a binding site for phytochromobilin. PAS domains are found at residues 604 to 674 (IVNE…LEGS) and 737 to 808 (DYAR…TKLR). Residues 889–1111 (YLRHEVKDPE…FVILTEFPLI (223 aa)) form the Histidine kinase domain.

Belongs to the phytochrome family. In terms of assembly, homodimer. In terms of processing, contains one covalently linked phytochromobilin chromophore.

Functionally, regulatory photoreceptor which exists in two forms that are reversibly interconvertible by light: the Pr form that absorbs maximally in the red region of the spectrum and the Pfr form that absorbs maximally in the far-red region. Photoconversion of Pr to Pfr induces an array of morphogenic responses, whereas reconversion of Pfr to Pr cancels the induction of those responses. Pfr controls the expression of a number of nuclear genes including those encoding the small subunit of ribulose-bisphosphate carboxylase, chlorophyll A/B binding protein, protochlorophyllide reductase, rRNA, etc. It also controls the expression of its own gene(s) in a negative feedback fashion. The chain is Phytochrome C (PHYC) from Arabidopsis thaliana (Mouse-ear cress).